We begin with the raw amino-acid sequence, 828 residues long: Periplasmic nitrate reductase (828 aa).

Positions 1–31 (MKLSRRHFMKANAVAAAAAVAGITIPIAVRA) form a signal peptide, tat-type signal. One can recognise a 4Fe-4S Mo/W bis-MGD-type domain in the interval 39 to 95 (IHWDKAPCRFCGVGCGVLVGTQNGRIVASQGDPDAPVNRGLNCIKGYFLPKIMYGQD). Residues Cys-46, Cys-49, Cys-53, and Cys-81 each contribute to the [4Fe-4S] cluster site. Mo-bis(molybdopterin guanine dinucleotide)-binding positions include Lys-83, Gln-150, Asn-175, Cys-179, 212–219 (WGSNMAEM), 243–247 (STYQH), 262–264 (QTD), Met-372, Gln-376, Asn-482, 508–509 (SD), Lys-531, Asp-558, and 718–727 (TGRVLEHWHT). Position 794 (Phe-794) interacts with substrate. Residues Asn-802 and Lys-819 each coordinate Mo-bis(molybdopterin guanine dinucleotide).

It belongs to the prokaryotic molybdopterin-containing oxidoreductase family. NasA/NapA/NarB subfamily. As to quaternary structure, component of the periplasmic nitrate reductase NapAB complex composed of NapA and NapB. [4Fe-4S] cluster serves as cofactor. The cofactor is Mo-bis(molybdopterin guanine dinucleotide). Predicted to be exported by the Tat system. The position of the signal peptide cleavage has not been experimentally proven.

It is found in the periplasm. The catalysed reaction is 2 Fe(II)-[cytochrome] + nitrate + 2 H(+) = 2 Fe(III)-[cytochrome] + nitrite + H2O. In terms of biological role, catalytic subunit of the periplasmic nitrate reductase complex NapAB. Receives electrons from NapB and catalyzes the reduction of nitrate to nitrite. The polypeptide is Periplasmic nitrate reductase (Pectobacterium carotovorum subsp. carotovorum (strain PC1)).